An 84-amino-acid chain; its full sequence is Anaphase-promoting complex subunit 11 (84 aa).

Zn(2+)-binding residues include Cys23, Cys26, Cys34, Cys37, Cys44, Cys51, His53, His56, His58, Cys59, Cys73, and Cys76. An RING-type zinc finger spans residues Cys34 to Arg77.

This sequence belongs to the RING-box family. The mammalian APC/C is composed at least of 14 distinct subunits ANAPC1, ANAPC2, CDC27/APC3, ANAPC4, ANAPC5, CDC16/APC6, ANAPC7, CDC23/APC8, ANAPC10, ANAPC11, CDC26/APC12, ANAPC13, ANAPC15 and ANAPC16 that assemble into a complex of at least 19 chains with a combined molecular mass of around 1.2 MDa; APC/C interacts with FZR1 and FBXO5. Interacts with the cullin domain of ANAPC2. Interacts with UBE2D2. In terms of processing, auto-ubiquitinated.

Its subcellular location is the cytoplasm. The protein localises to the nucleus. It functions in the pathway protein modification; protein ubiquitination. In terms of biological role, together with the cullin protein ANAPC2, constitutes the catalytic component of the anaphase promoting complex/cyclosome (APC/C), a cell cycle-regulated E3 ubiquitin ligase that controls progression through mitosis and the G1 phase of the cell cycle. The APC/C complex acts by mediating ubiquitination and subsequent degradation of target proteins: it mainly mediates the formation of 'Lys-11'-linked polyubiquitin chains and, to a lower extent, the formation of 'Lys-48'- and 'Lys-63'-linked polyubiquitin chains. The APC/C complex catalyzes assembly of branched 'Lys-11'-/'Lys-48'-linked branched ubiquitin chains on target proteins. May recruit the E2 ubiquitin-conjugating enzymes to the complex. The sequence is that of Anaphase-promoting complex subunit 11 (ANAPC11) from Bos taurus (Bovine).